A 720-amino-acid polypeptide reads, in one-letter code: Fatty acid CoA ligase Acsl3 (720 aa).

A helical; Signal-anchor for type III membrane protein membrane pass occupies residues isoleucine 21–phenylalanine 41. The Cytoplasmic portion of the chain corresponds to tyrosine 42 to lysine 720. Serine 683 bears the Phosphoserine mark.

It belongs to the ATP-dependent AMP-binding enzyme family. Mg(2+) is required as a cofactor.

The protein localises to the mitochondrion outer membrane. It is found in the peroxisome membrane. The protein resides in the microsome membrane. Its subcellular location is the endoplasmic reticulum membrane. It catalyses the reaction a long-chain fatty acid + ATP + CoA = a long-chain fatty acyl-CoA + AMP + diphosphate. It carries out the reaction (5Z,8Z,11Z,14Z)-eicosatetraenoate + ATP + CoA = (5Z,8Z,11Z,14Z)-eicosatetraenoyl-CoA + AMP + diphosphate. The catalysed reaction is (E)-hexadec-2-enoate + ATP + CoA = (2E)-hexadecenoyl-CoA + AMP + diphosphate. The enzyme catalyses 15-hydroxy-(5Z,8Z,11Z,13E)-eicosatetraenoate + ATP + CoA = 15-hydroxy-(5Z,8Z,11Z,13E)-eicosatetraenoyl-CoA + AMP + diphosphate. It catalyses the reaction 12-hydroxy-(5Z,8Z,10E,14Z)-eicosatetraenoate + ATP + CoA = 12-hydroxy-(5Z,8Z,10E,14Z)-eicosatetraenoyl-CoA + AMP + diphosphate. It carries out the reaction 5-hydroxy-(6E,8Z,11Z,14Z)-eicosatetraenoate + ATP + CoA = 5-hydroxy-(6E,8Z,11Z,14Z)-eicosatetraenoyl-CoA + AMP + diphosphate. The catalysed reaction is 14,15-epoxy-(5Z,8Z,11Z)-eicosatrienoate + ATP + CoA = 14,15-epoxy-(5Z,8Z,11Z)-eicosatrienoyl-CoA + AMP + diphosphate. The enzyme catalyses 11,12-epoxy-(5Z,8Z,14Z)-eicosatrienoate + ATP + CoA = 11,12-epoxy-(5Z,8Z,14Z)-eicosatrienoyl-CoA + AMP + diphosphate. It catalyses the reaction a medium-chain fatty acid + ATP + CoA = a medium-chain fatty acyl-CoA + AMP + diphosphate. It carries out the reaction hexadecanoate + ATP + CoA = hexadecanoyl-CoA + AMP + diphosphate. The catalysed reaction is tetradecanoate + ATP + CoA = tetradecanoyl-CoA + AMP + diphosphate. The enzyme catalyses dodecanoate + ATP + CoA = dodecanoyl-CoA + AMP + diphosphate. It catalyses the reaction octadecanoate + ATP + CoA = octadecanoyl-CoA + AMP + diphosphate. It carries out the reaction eicosanoate + ATP + CoA = eicosanoyl-CoA + AMP + diphosphate. The catalysed reaction is (9Z)-octadecenoate + ATP + CoA = (9Z)-octadecenoyl-CoA + AMP + diphosphate. The enzyme catalyses (9Z)-hexadecenoate + ATP + CoA = (9Z)-hexadecenoyl-CoA + AMP + diphosphate. It catalyses the reaction (9Z,12Z)-octadecadienoate + ATP + CoA = (9Z,12Z)-octadecadienoyl-CoA + AMP + diphosphate. It carries out the reaction (9Z,12Z,15Z)-octadecatrienoate + ATP + CoA = (9Z,12Z,15Z)-octadecatrienoyl-CoA + AMP + diphosphate. The catalysed reaction is (4Z,7Z,10Z,13Z,16Z,19Z)-docosahexaenoate + ATP + CoA = (4Z,7Z,10Z,13Z,16Z,19Z)-docosahexaenoyl-CoA + AMP + diphosphate. The enzyme catalyses (5Z,8Z,11Z,14Z,17Z)-eicosapentaenoate + ATP + CoA = (5Z,8Z,11Z,14Z,17Z)-eicosapentaenoyl-CoA + AMP + diphosphate. It catalyses the reaction a fatty acid + ATP + CoA = a fatty acyl-CoA + AMP + diphosphate. Functionally, acyl-CoA synthetases (ACSL) activates long-chain fatty acids for both synthesis of cellular lipids, and degradation via beta-oxidation. Required for the incorporation of fatty acids into phosphatidylcholine, the major phospholipid located on the surface of VLDL (very low density lipoproteins). Has mainly an anabolic role in energy metabolism. Mediates hepatic lipogenesis. Preferentially uses myristate, laurate, arachidonate and eicosapentaenoate as substrates. Both isoforms exhibit the same level of activity. The protein is Fatty acid CoA ligase Acsl3 of Homo sapiens (Human).